Consider the following 216-residue polypeptide: ATP-dependent Clp protease proteolytic subunit 1 (216 aa).

The Nucleophile role is filled by Ser-119. His-144 is an active-site residue.

The protein belongs to the peptidase S14 family. In terms of assembly, fourteen ClpP subunits assemble into 2 heptameric rings which stack back to back to give a disk-like structure with a central cavity, resembling the structure of eukaryotic proteasomes.

It localises to the cytoplasm. It catalyses the reaction Hydrolysis of proteins to small peptides in the presence of ATP and magnesium. alpha-casein is the usual test substrate. In the absence of ATP, only oligopeptides shorter than five residues are hydrolyzed (such as succinyl-Leu-Tyr-|-NHMec, and Leu-Tyr-Leu-|-Tyr-Trp, in which cleavage of the -Tyr-|-Leu- and -Tyr-|-Trp bonds also occurs).. Cleaves peptides in various proteins in a process that requires ATP hydrolysis. Has a chymotrypsin-like activity. Plays a major role in the degradation of misfolded proteins. The polypeptide is ATP-dependent Clp protease proteolytic subunit 1 (Cutibacterium acnes (strain DSM 16379 / KPA171202) (Propionibacterium acnes)).